We begin with the raw amino-acid sequence, 533 residues long: Acid-sensing ion channel 2 (533 aa).

Positions 1–16 are enriched in basic and acidic residues; sequence MDLKEACGSEASRETE. Positions 1 to 23 are disordered; that stretch reads MDLKEACGSEASRETESGGMGSL. Residues 1-68 lie on the Cytoplasmic side of the membrane; it reads MDLKEACGSE…STSRRLLWSA (68 aa). Residues 69–89 form a helical membrane-spanning segment; it reads ALLASLVLLVLESTERLAYFL. Residues 90-445 lie on the Extracellular side of the membrane; the sequence is SYPHVTSVDA…ETIEQKKAYE (356 aa). 6 disulfide bridges follow: C113/C214, C310/C385, C328/C381, C332/C379, C341/C363, and C343/C355. N163 is a glycosylation site (N-linked (GlcNAc...) asparagine). N386 and N413 each carry an N-linked (GlcNAc...) asparagine glycan. The chain crosses the membrane as a helical span at residues 446–466; that stretch reads VAGLLGDIGGQMGLFIGASIL. The GAS motif; ion selectivity filter signature appears at 462–464; that stretch reads GAS. The Cytoplasmic portion of the chain corresponds to 467–533; sequence TLLELFDYAY…TLGTLEEIAC (67 aa).

The protein belongs to the amiloride-sensitive sodium channel (TC 1.A.6) family. ASIC2 subfamily. As to quaternary structure, can form homotrimers; probably non-functional. Heterotrimer; could form functional heterotrimers producing channel with specific properties depending on their composition. Expressed in central nervous system.

It is found in the cell membrane. It catalyses the reaction Na(+)(in) = Na(+)(out). Inhibited by the diuretic drug amiloride. Its function is as follows. Could form pH-gated heterotrimeric sodium channels that act as postsynaptic excitatory sensors in the nervous system, generating rapid, transient inward currents that fully desensitize upon extracellular acidification. The chain is Acid-sensing ion channel 2 (asic2) from Danio rerio (Zebrafish).